Consider the following 197-residue polypeptide: GTP cyclohydrolase-2 (197 aa).

49 to 53 (RVHSE) contributes to the GTP binding site. Residues C54, C65, and C67 each contribute to the Zn(2+) site. GTP is bound by residues Q70, 92 to 94 (EGR), and T114. D126 functions as the Proton acceptor in the catalytic mechanism. R128 serves as the catalytic Nucleophile. GTP contacts are provided by T149 and K154.

It belongs to the GTP cyclohydrolase II family. In terms of assembly, homodimer. The cofactor is Zn(2+).

The catalysed reaction is GTP + 4 H2O = 2,5-diamino-6-hydroxy-4-(5-phosphoribosylamino)-pyrimidine + formate + 2 phosphate + 3 H(+). Its pathway is cofactor biosynthesis; riboflavin biosynthesis; 5-amino-6-(D-ribitylamino)uracil from GTP: step 1/4. Catalyzes the conversion of GTP to 2,5-diamino-6-ribosylamino-4(3H)-pyrimidinone 5'-phosphate (DARP), formate and pyrophosphate. The protein is GTP cyclohydrolase-2 of Pectobacterium atrosepticum (strain SCRI 1043 / ATCC BAA-672) (Erwinia carotovora subsp. atroseptica).